We begin with the raw amino-acid sequence, 176 residues long: ATP synthase subunit b, chloroplastic (176 aa).

Residues 19–39 form a helical membrane-spanning segment; the sequence is LDLLETNIINIFILIIILIYL.

It belongs to the ATPase B chain family. In terms of assembly, F-type ATPases have 2 components, F(1) - the catalytic core - and F(0) - the membrane proton channel. F(1) has five subunits: alpha(3), beta(3), gamma(1), delta(1), epsilon(1). F(0) has four main subunits: a(1), b(1), b'(1) and c(10-14). The alpha and beta chains form an alternating ring which encloses part of the gamma chain. F(1) is attached to F(0) by a central stalk formed by the gamma and epsilon chains, while a peripheral stalk is formed by the delta, b and b' chains.

It localises to the plastid. It is found in the chloroplast thylakoid membrane. F(1)F(0) ATP synthase produces ATP from ADP in the presence of a proton or sodium gradient. F-type ATPases consist of two structural domains, F(1) containing the extramembraneous catalytic core and F(0) containing the membrane proton channel, linked together by a central stalk and a peripheral stalk. During catalysis, ATP synthesis in the catalytic domain of F(1) is coupled via a rotary mechanism of the central stalk subunits to proton translocation. Functionally, component of the F(0) channel, it forms part of the peripheral stalk, linking F(1) to F(0). The polypeptide is ATP synthase subunit b, chloroplastic (Galdieria sulphuraria (Red alga)).